The following is a 929-amino-acid chain: SCY1-like protein 2 (929 aa).

Residues 32–327 enclose the Protein kinase domain; that stretch reads FDVGRHIASG…ADQMTKIPFF (296 aa). The stretch at 443-479 is one HEAT repeat; the sequence is DEIKNSVLPMVYRALEAPSIQIQELCLNIIPTFANLI. Residues 661-701 are a coiled coil; the sequence is ESENKEDGLQNKHKRASLTLEEKQKLAKEQEQAQKLKSQQP. A Phosphoserine modification is found at serine 677. Basic and acidic residues predominate over residues 684-694; that stretch reads QKLAKEQEQAQ. Disordered regions lie at residues 684-709 and 906-929; these read QKLA…VHTP and NFAQ…DLFG. The segment covering 695–705 has biased composition (low complexity); it reads KLKSQQPLKPQ. The tract at residues 699–929 is necessary for interaction with AP2 complex and clathrin, interaction with clathrin is necessary for its targeting to the TGN and endosomal membranes; sequence QQPLKPQVHT…ASNDLKDLFG (231 aa). Phosphothreonine is present on threonine 708. The segment covering 912–922 has biased composition (polar residues); it reads TTMTNSSSASN.

It belongs to the protein kinase superfamily. Interacts with clathrin and AP2B1; the interaction mediates the association with the AP-2 complex. Post-translationally, could autophosphorylate in presence of poly-L-lysine.

It localises to the cytoplasmic vesicle. It is found in the clathrin-coated vesicle. The protein resides in the golgi apparatus. The protein localises to the trans-Golgi network membrane. Its subcellular location is the endosome membrane. Component of the AP2-containing clathrin coat that may regulate clathrin-dependent trafficking at plasma membrane, TGN and endosomal system. A possible serine/threonine-protein kinase toward the beta2-subunit of the plasma membrane adapter complex AP2 and other proteins in presence of poly-L-lysine has not been confirmed. By regulating the expression of excitatory receptors at synapses, plays an essential role in neuronal function and signaling and in brain development. The protein is SCY1-like protein 2 of Homo sapiens (Human).